A 609-amino-acid polypeptide reads, in one-letter code: Sterol O-acyltransferase 2 (609 aa).

Positions 1–15 (MGRTNTSDQLNAISD) are enriched in polar residues. The interval 1–41 (MGRTNTSDQLNAISDKNTKRKSLALDNEYHNNSSSEDDSSK) is disordered. The next 6 helical transmembrane spans lie at 152–172 (FFGM…NNLI), 195–215 (LFKV…AFFV), 229–249 (VGWW…LWIA), 253–273 (CLDF…VFIM), 402–422 (WSYV…MILI), and 451–471 (FLLM…FFLI). Residues 490–496 (FYGPWWS) carry the FYXDWWN motif motif. The next 2 helical transmembrane spans lie at 534–554 (AAII…YVIF) and 589–609 (IICW…YLVF). H546 is an active-site residue.

It belongs to the membrane-bound acyltransferase family. Sterol o-acyltransferase subfamily.

It localises to the endoplasmic reticulum membrane. With respect to regulation, inhibited by the protoberberine derivative HWY-289 in a non-competitive manner. Inhibited by miconazole. Not inhibited by CI-976, polyoxin D, amphotericin B or nikkomycin Z. Sterol O-acyltransferase that catalyzes the formation of stery esters. This chain is Sterol O-acyltransferase 2, found in Candida albicans (Yeast).